A 432-amino-acid chain; its full sequence is MPLQYQSGFGNDWATEALPGALPAGRNSPQRCPYGLYAEQLSGTAFTAPRAENRRSWLYRIRPAAQHRPFEPFDGAARWLSDFGAAPVTPNQLRWSPLPLPDAPTDFIEGVQTWGGNGGPGEHGGVGIHLYAANRSMQGRYFYNADGELLIVPQQGRLRLATELGIIEVEPLEIAVIPRGVRLRVDLPDGQARGYMLENFGAALHLPELGPIGSNCLANARDFQTPVACYEDIEGDFELIAKFTGGFWRAAIGHSPLDVVAWHGTHAPYKYDLRHFNTIGSISFDHPDPSIFTVLTSPSDTPGTANMDFAIFPPRVLAMENTFRPPWFHRNVASEFMGLIHGVYDAKAEGFAPGGASLHNCMSGHGPDADTFEKATAADTSQAHYIRDTMAFMFETRRVIRPTAQALASAQLQSDYYECWQGLNKHFDPAQP.

His-286 serves as the catalytic Proton acceptor. 2 residues coordinate Fe cation: His-329 and Glu-335. 2 residues coordinate homogentisate: Tyr-344 and His-365. Residue His-365 participates in Fe cation binding.

Belongs to the homogentisate dioxygenase family. Hexamer; dimer of trimers. It depends on Fe cation as a cofactor.

The enzyme catalyses homogentisate + O2 = 4-maleylacetoacetate + H(+). Its pathway is amino-acid degradation; L-phenylalanine degradation; acetoacetate and fumarate from L-phenylalanine: step 4/6. Involved in the catabolism of homogentisate (2,5-dihydroxyphenylacetate or 2,5-OH-PhAc), a central intermediate in the degradation of phenylalanine and tyrosine. Catalyzes the oxidative ring cleavage of the aromatic ring of homogentisate to yield maleylacetoacetate. The chain is Homogentisate 1,2-dioxygenase from Bordetella petrii (strain ATCC BAA-461 / DSM 12804 / CCUG 43448).